A 33-amino-acid chain; its full sequence is Photosystem II reaction center protein Psb30 (33 aa).

The helical transmembrane segment at 5–25 threads the bilayer; sequence IVAQLTVLALIVVSGPLVIAL.

The protein belongs to the Psb30/Ycf12 family. As to quaternary structure, PSII is composed of 1 copy each of membrane proteins PsbA, PsbB, PsbC, PsbD, PsbE, PsbF, PsbH, PsbI, PsbJ, PsbK, PsbL, PsbM, PsbT, PsbX, PsbY, PsbZ, Psb30/Ycf12, peripheral proteins of the oxygen-evolving complex and a large number of cofactors. It forms dimeric complexes.

The protein resides in the plastid. It is found in the chloroplast thylakoid membrane. A core subunit of photosystem II (PSII), probably helps stabilize the reaction center. This is Photosystem II reaction center protein Psb30 from Angiopteris evecta (Mule's foot fern).